Reading from the N-terminus, the 358-residue chain is Probable D-xylulose reductase A (358 aa).

Zn(2+)-binding residues include Cys47, His72, and Glu73. Residue 182–187 (GAGPVG) participates in NAD(+) binding.

This sequence belongs to the zinc-containing alcohol dehydrogenase family. Zn(2+) serves as cofactor.

It catalyses the reaction xylitol + NAD(+) = D-xylulose + NADH + H(+). Its pathway is carbohydrate degradation; L-arabinose degradation via L-arabinitol; D-xylulose 5-phosphate from L-arabinose (fungal route): step 4/5. Xylitol dehydrogenase which catalyzes the conversion of xylitol to D-xylulose. Xylose is a major component of hemicelluloses such as xylan. Most fungi utilize D-xylose via three enzymatic reactions, xylose reductase (XR), xylitol dehydrogenase (XDH), and xylulokinase, to form xylulose 5-phosphate, which enters pentose phosphate pathway. The chain is Probable D-xylulose reductase A (xdhA) from Aspergillus clavatus (strain ATCC 1007 / CBS 513.65 / DSM 816 / NCTC 3887 / NRRL 1 / QM 1276 / 107).